A 99-amino-acid chain; its full sequence is Putative membrane protein insertion efficiency factor (99 aa).

Belongs to the UPF0161 family.

The protein localises to the cell inner membrane. In terms of biological role, could be involved in insertion of integral membrane proteins into the membrane. This chain is Putative membrane protein insertion efficiency factor, found in Salinibacter ruber (strain DSM 13855 / M31).